Consider the following 466-residue polypeptide: 55 kDa erythrocyte membrane protein (466 aa).

An N-acetylthreonine modification is found at T2. Residues S13 and S19 each carry the phosphoserine modification. T49 is modified (phosphothreonine). Phosphoserine is present on residues S52, S57, and S110. Residues 71–152 (LIQFEKVTEE…MISLKVIPNQ (82 aa)) form the PDZ domain. The SH3 domain occupies 158–228 (ALQMFMRAQF…PSPELQEWRV (71 aa)). S243 is modified (phosphoserine). The tract at residues 268–466 (VVSYEEVVRL…PQWVPVSWVY (199 aa)) is interaction with PALS1. The 170-residue stretch at 282 to 451 (RKTLVLIGAS…TLKKLQEAFD (170 aa)) folds into the Guanylate kinase-like domain.

This sequence belongs to the MAGUK family. As to quaternary structure, heterodimer with PALS1. Interacts with DLG5 and NF2. Interacts (via guanylate kinase-like domain) with WHRN (via third PDZ domain). Palmitoylated.

The protein resides in the cell membrane. Its subcellular location is the cell projection. It is found in the stereocilium. Its function is as follows. Essential regulator of neutrophil polarity. Regulates neutrophil polarization by regulating AKT1 phosphorylation through a mechanism that is independent of PIK3CG activity. This is 55 kDa erythrocyte membrane protein (MPP1) from Pongo abelii (Sumatran orangutan).